Consider the following 539-residue polypeptide: Chaperonin GroEL (539 aa).

Residues 30–33 (TLGP), 87–91 (DGTTT), Gly414, 479–481 (DAL), and Asp495 contribute to the ATP site.

It belongs to the chaperonin (HSP60) family. Forms a cylinder of 14 subunits composed of two heptameric rings stacked back-to-back. Interacts with the co-chaperonin GroES.

It localises to the cytoplasm. The catalysed reaction is ATP + H2O + a folded polypeptide = ADP + phosphate + an unfolded polypeptide.. Together with its co-chaperonin GroES, plays an essential role in assisting protein folding. The GroEL-GroES system forms a nano-cage that allows encapsulation of the non-native substrate proteins and provides a physical environment optimized to promote and accelerate protein folding. The chain is Chaperonin GroEL from Caldicellulosiruptor saccharolyticus (strain ATCC 43494 / DSM 8903 / Tp8T 6331).